We begin with the raw amino-acid sequence, 520 residues long: Laccase-4 (520 aa).

The signal sequence occupies residues 1-18 (MGRFSSLCALTAVIHSFG). Plastocyanin-like domains are found at residues 24–149 (IGPV…MVVY), 161–303 (VDDE…ILRY), and 370–491 (TVPV…FSED). N-linked (GlcNAc...) asparagine glycosylation is found at Asn73 and Asn76. Positions 86, 88, 131, and 133 each coordinate Cu cation. 2 disulfides stabilise this stretch: Cys107-Cys509 and Cys139-Cys227. 2 N-linked (GlcNAc...) asparagine glycosylation sites follow: Asn239 and Asn399. Cu cation-binding residues include His418, His421, His423, His473, Cys474, His475, and His479. N-linked (GlcNAc...) asparagine glycosylation is present at Asn497.

It belongs to the multicopper oxidase family. As to quaternary structure, homodimer. Requires Cu cation as cofactor.

The protein localises to the secreted. The enzyme catalyses 4 hydroquinone + O2 = 4 benzosemiquinone + 2 H2O. Its function is as follows. Lignin degradation and detoxification of lignin-derived products. This chain is Laccase-4 (LCC4), found in Trametes villosa (White-rot fungus).